Consider the following 285-residue polypeptide: Probable endonuclease 4 (285 aa).

Positions 69, 109, 145, 179, 182, 216, 229, 231, and 261 each coordinate Zn(2+).

The protein belongs to the AP endonuclease 2 family. Zn(2+) serves as cofactor.

It catalyses the reaction Endonucleolytic cleavage to 5'-phosphooligonucleotide end-products.. In terms of biological role, endonuclease IV plays a role in DNA repair. It cleaves phosphodiester bonds at apurinic or apyrimidinic (AP) sites, generating a 3'-hydroxyl group and a 5'-terminal sugar phosphate. This chain is Probable endonuclease 4, found in Shigella sonnei (strain Ss046).